The primary structure comprises 327 residues: Beta-1,4-galactosyltransferase 7 (327 aa).

Over 1-30 (MFPSRRKAAQLPWEDGRSGLLSGGLPRKCS) the chain is Cytoplasmic. Residues 31-51 (VFHLFVACLSLGFFSLLWLQL) form a helical; Signal-anchor for type II membrane protein membrane-spanning segment. At 52-327 (SCSGDVARAV…KTATPWCTFS (276 aa)) the chain is on the lumenal side. Residues 63-87 (GQGQETSGPPRACPPEPPPEHWEED) form a disordered region. UDP-alpha-D-galactose-binding positions include 100–104 (PFRER) and 139–141 (FNR). An N-linked (GlcNAc...) asparagine glycan is attached at Asn154. UDP-alpha-D-galactose contacts are provided by residues 164–165 (VD), Tyr194, and Trp224. Residue Asp165 participates in Mn(2+) binding. Residue 226-229 (REDD) participates in N-acetyl-D-glucosamine binding. His257 provides a ligand contact to Mn(2+). UDP-alpha-D-galactose-binding positions include 257–259 (HLH) and Arg266. Residues Cys316 and Cys324 are joined by a disulfide bond.

Belongs to the glycosyltransferase 7 family. It depends on Mn(2+) as a cofactor. As to expression, high expression in heart, pancreas and liver, medium in placenta and kidney, low in brain, skeletal muscle and lung.

The protein resides in the golgi apparatus. Its subcellular location is the golgi stack membrane. The catalysed reaction is 3-O-(beta-D-xylosyl)-L-seryl-[protein] + UDP-alpha-D-galactose = 3-O-(beta-D-galactosyl-(1-&gt;4)-beta-D-xylosyl)-L-seryl-[protein] + UDP + H(+). The protein operates within protein modification; protein glycosylation. Its function is as follows. Required for the biosynthesis of the tetrasaccharide linkage region of proteoglycans, especially for small proteoglycans in skin fibroblasts. In Homo sapiens (Human), this protein is Beta-1,4-galactosyltransferase 7 (B4GALT7).